Reading from the N-terminus, the 759-residue chain is LPS-assembly protein LptD (759 aa).

Positions 1–45 (MKPLKLELNPRDFNHYQAAFLPYRMKIKQPLHVLCFSVCSLSAVA) are cleaved as a signal peptide.

This sequence belongs to the LptD family. In terms of assembly, component of the lipopolysaccharide transport and assembly complex. Interacts with LptE and LptA.

It localises to the cell outer membrane. Its function is as follows. Together with LptE, is involved in the assembly of lipopolysaccharide (LPS) at the surface of the outer membrane. The protein is LPS-assembly protein LptD of Pseudoalteromonas atlantica (strain T6c / ATCC BAA-1087).